Reading from the N-terminus, the 136-residue chain is 2-hydroxyisobutanoyl-CoA mutase small subunit (136 aa).

A B12-binding domain is found at 5-133; the sequence is PIRVLLAKVG…DSIRSLVAAR (129 aa). H18 is a binding site for adenosylcob(III)alamin.

Belongs to the acyl-CoA mutase small subunit family. As to quaternary structure, homotetramer composed of two large substrate-binding subunits (HcmA) and two small cobalamin-binding subunits (HcmB). Requires adenosylcob(III)alamin as cofactor.

It catalyses the reaction 2-hydroxyisobutanoyl-CoA = (3S)-3-hydroxybutanoyl-CoA. In terms of biological role, together with HcmA, catalyzes the isomerization of 2-hydroxyisobutyryl-CoA and 3-hydroxybutyryl-CoA. Is specific for 2-hydroxyisobutyryl-CoA and (S)-3-hydroxybutyryl-CoA, and shows only very low activity with (R)-3-hydroxybutyryl-CoA, isobutyryl-CoA and butyryl-CoA. In vitro, can isomerize pivalyl-CoA and isovaleryl-CoA, with much lower efficiency. Plays a central role in the degradation of substrates bearing a tert-butyl moiety, such as the fuel oxygenate methyl tert-butyl ether (MTBE) and its metabolites. This is 2-hydroxyisobutanoyl-CoA mutase small subunit from Aquincola tertiaricarbonis.